A 253-amino-acid polypeptide reads, in one-letter code: tRNA pseudouridine synthase A (253 aa).

The active-site Nucleophile is the aspartate 52. Tyrosine 111 serves as a coordination point for substrate.

The protein belongs to the tRNA pseudouridine synthase TruA family. Homodimer.

The enzyme catalyses uridine(38/39/40) in tRNA = pseudouridine(38/39/40) in tRNA. In terms of biological role, formation of pseudouridine at positions 38, 39 and 40 in the anticodon stem and loop of transfer RNAs. The protein is tRNA pseudouridine synthase A of Methylobacterium radiotolerans (strain ATCC 27329 / DSM 1819 / JCM 2831 / NBRC 15690 / NCIMB 10815 / 0-1).